A 475-amino-acid chain; its full sequence is MAKTNSTSKNNKLEIKSVFAYQAFDSRGFPTVACEVVLNDGSKGLSMVSSGASTGEKEALELRDGGTKYHGKGVTKAVNNINKKIGPKILGVDATLQTQIDEFMIELDGTKTKAKLGANAILAVSMAVCRAAAKSLNLPLYQYIAKKVAKVKGADFILPVPMLNVINGGAHADNTIDFQEFMIMPVGAKTMAKALQMASEVFHSLQKLLKAKKFNTNKGDEGGFAPNLKSAEEALDLMSQAVVDAGYALGKDVAFALDCAASEFYSKEKQAYVFKKAVKAGILSEEKGTKTTEQLISYLEDLTKKYPIVSIEDGLDENDWKGMESLTKKIGKKVQIVGDDTYCTNPELTSKGVSLSATNSVLIKLNQIGTLTETIQTINIAKKANWTAVVSHRSGETEDAFIADLAVALSTGQIKTGSMSRSERIAKYNRLLAIEMQLGNKAKYLGSKTFYNLSTPAATPKKSPAKKTTKAKSKK.

(2R)-2-phosphoglycerate is bound at residue glutamine 179. Glutamate 221 serves as the catalytic Proton donor. Residues aspartate 258, glutamate 312, and aspartate 339 each contribute to the Mg(2+) site. Positions 364, 393, 394, and 415 each coordinate (2R)-2-phosphoglycerate. The active-site Proton acceptor is lysine 364. The segment at serine 454–lysine 475 is disordered. The segment covering serine 463–lysine 475 has biased composition (basic residues).

Belongs to the enolase family. It depends on Mg(2+) as a cofactor.

Its subcellular location is the cell membrane. The protein resides in the cytoplasm. It is found in the secreted. The protein localises to the cell surface. The catalysed reaction is (2R)-2-phosphoglycerate = phosphoenolpyruvate + H2O. It participates in carbohydrate degradation; glycolysis; pyruvate from D-glyceraldehyde 3-phosphate: step 4/5. Catalyzes the reversible conversion of 2-phosphoglycerate (2-PG) into phosphoenolpyruvate (PEP). It is essential for the degradation of carbohydrates via glycolysis. In terms of biological role, 'Moonlights' as a plasminogen receptor. Binds host (chicken) plasminogen; enolase antiserum inhibits M.gallisepticum adherence to chicken embryo fibroblasts. The sequence is that of Enolase from Mycoplasmoides gallisepticum (strain R(low / passage 15 / clone 2)) (Mycoplasma gallisepticum).